A 505-amino-acid polypeptide reads, in one-letter code: Glutamate--tRNA ligase (505 aa).

The 'HIGH' region motif lies at 12 to 22; sequence PSPTGALHIGG. The 'KMSKS' region signature appears at 260 to 264; sequence KLSKR. Lys263 lines the ATP pocket.

It belongs to the class-I aminoacyl-tRNA synthetase family. Glutamate--tRNA ligase type 1 subfamily. Monomer.

It localises to the cytoplasm. The catalysed reaction is tRNA(Glu) + L-glutamate + ATP = L-glutamyl-tRNA(Glu) + AMP + diphosphate. Catalyzes the attachment of glutamate to tRNA(Glu) in a two-step reaction: glutamate is first activated by ATP to form Glu-AMP and then transferred to the acceptor end of tRNA(Glu). This chain is Glutamate--tRNA ligase, found in Parabacteroides distasonis (strain ATCC 8503 / DSM 20701 / CIP 104284 / JCM 5825 / NCTC 11152).